A 148-amino-acid chain; its full sequence is Transcription antitermination protein NusB (148 aa).

The protein belongs to the NusB family.

In terms of biological role, involved in transcription antitermination. Required for transcription of ribosomal RNA (rRNA) genes. Binds specifically to the boxA antiterminator sequence of the ribosomal RNA (rrn) operons. This Nitrosococcus oceani (strain ATCC 19707 / BCRC 17464 / JCM 30415 / NCIMB 11848 / C-107) protein is Transcription antitermination protein NusB.